A 371-amino-acid polypeptide reads, in one-letter code: Chorismate synthase (371 aa).

Residues arginine 48 and arginine 54 each coordinate NADP(+). FMN-binding positions include 132-134, 244-245, glycine 289, 304-308, and arginine 330; these read RSS, NA, and KPTSS.

Belongs to the chorismate synthase family. In terms of assembly, homotetramer. FMNH2 is required as a cofactor.

The enzyme catalyses 5-O-(1-carboxyvinyl)-3-phosphoshikimate = chorismate + phosphate. Its pathway is metabolic intermediate biosynthesis; chorismate biosynthesis; chorismate from D-erythrose 4-phosphate and phosphoenolpyruvate: step 7/7. Catalyzes the anti-1,4-elimination of the C-3 phosphate and the C-6 proR hydrogen from 5-enolpyruvylshikimate-3-phosphate (EPSP) to yield chorismate, which is the branch point compound that serves as the starting substrate for the three terminal pathways of aromatic amino acid biosynthesis. This reaction introduces a second double bond into the aromatic ring system. The chain is Chorismate synthase from Methylobacterium nodulans (strain LMG 21967 / CNCM I-2342 / ORS 2060).